Reading from the N-terminus, the 307-residue chain is OTU domain-containing protein 2 (307 aa).

Disordered stretches follow at residues Glu-23 to Val-46 and Ser-96 to Asp-130. The span at Gln-103 to Gln-114 shows a compositional bias: low complexity. Residues Leu-167–Ser-307 enclose the OTU domain.

The chain is OTU domain-containing protein 2 (OTU2) from Saccharomyces cerevisiae (strain ATCC 204508 / S288c) (Baker's yeast).